Reading from the N-terminus, the 250-residue chain is Manganese transport system ATP-binding protein MntB (250 aa).

In terms of domain architecture, ABC transporter spans 5–236 (VKVDNLSVFY…MVAKTYQGNL (232 aa)). 37–44 (GPNGAGKS) serves as a coordination point for ATP.

Belongs to the ABC transporter superfamily.

It localises to the cell membrane. Its function is as follows. This protein is probably a component of a manganese permease, a binding protein-dependent, ATP-driven transport system. Probably responsible for energy coupling to the transport system. This is Manganese transport system ATP-binding protein MntB (mntB) from Halalkalibacterium halodurans (strain ATCC BAA-125 / DSM 18197 / FERM 7344 / JCM 9153 / C-125) (Bacillus halodurans).